The following is a 569-amino-acid chain: Thiol:disulfide interchange protein DsbD (569 aa).

The signal sequence occupies residues 1–19 (MAQRILTLILLLCSTSAFA). Cystine bridges form between Cys-122–Cys-128 and Cys-187–Cys-309. 7 consecutive transmembrane segments (helical) span residues 168-188 (LPFSALWALLIGIGIAFTPCV), 213-233 (LLTFIYVQGMALTYTALGLVV), 248-268 (YVLIGLALVFTLLALSMFGLF), 301-321 (IAGLICSPCTTAPLSAILLYI), 328-348 (WLGGGTLYLYALGMGLPLILI), 362-382 (WMEHVKTAFGFVILALPVFLL), and 391-411 (GLRLWSLLGVAFFGWAFITSL). In terms of domain architecture, Thioredoxin spans 430–569 (LVSVRPLQDW…FSAHLRDRQP (140 aa)). A disulfide bridge connects residues Cys-484 and Cys-487.

It belongs to the thioredoxin family. DsbD subfamily.

Its subcellular location is the cell inner membrane. It carries out the reaction [protein]-dithiol + NAD(+) = [protein]-disulfide + NADH + H(+). The catalysed reaction is [protein]-dithiol + NADP(+) = [protein]-disulfide + NADPH + H(+). Required to facilitate the formation of correct disulfide bonds in some periplasmic proteins and for the assembly of the periplasmic c-type cytochromes. Acts by transferring electrons from cytoplasmic thioredoxin to the periplasm. This transfer involves a cascade of disulfide bond formation and reduction steps. In Citrobacter koseri (strain ATCC BAA-895 / CDC 4225-83 / SGSC4696), this protein is Thiol:disulfide interchange protein DsbD.